The sequence spans 286 residues: MGRARPKSQKRGDYRVSRSQENAAELPKKKFYRQRAHANPFSDHHLVYPACPDEMDWTLYYPAFPTQGETLPNHIFTHNQSCMRISDSTRSGSLQKNIEVVDIGCGFGGLLVALAPLMPETLALGLEIRTSVTEYVQEKIRALRAQNEGTGLYQNIGCIRANSMKFLPNFLRKSQLSKIFICFPDPHFKARKHKARIVSATLNSEYAFALRPGGIVYTITDVEPLHQWMAEHFVAHPSFERLSQEEEEADECVQVMKSETEEGRKVTRNQGQKFVALFRRIEDPPW.

Residues 1–22 (MGRARPKSQKRGDYRVSRSQEN) are disordered. S-adenosyl-L-methionine-binding positions include G104, 127 to 128 (EI), 162 to 163 (NS), and C182. D185 is a catalytic residue. 260–262 (TEE) lines the S-adenosyl-L-methionine pocket.

The protein belongs to the class I-like SAM-binding methyltransferase superfamily. TrmB family. In terms of assembly, forms a complex with TRM82.

It localises to the nucleus. The enzyme catalyses guanosine(46) in tRNA + S-adenosyl-L-methionine = N(7)-methylguanosine(46) in tRNA + S-adenosyl-L-homocysteine. Its pathway is tRNA modification; N(7)-methylguanine-tRNA biosynthesis. Its function is as follows. Catalyzes the formation of N(7)-methylguanine at position 46 (m7G46) in tRNA. The chain is tRNA (guanine-N(7)-)-methyltransferase from Colletotrichum orbiculare (strain 104-T / ATCC 96160 / CBS 514.97 / LARS 414 / MAFF 240422) (Cucumber anthracnose fungus).